A 282-amino-acid polypeptide reads, in one-letter code: Elongation factor Ts (282 aa).

The segment at 80-83 is involved in Mg(2+) ion dislocation from EF-Tu; it reads TDFV.

It belongs to the EF-Ts family.

Its subcellular location is the cytoplasm. In terms of biological role, associates with the EF-Tu.GDP complex and induces the exchange of GDP to GTP. It remains bound to the aminoacyl-tRNA.EF-Tu.GTP complex up to the GTP hydrolysis stage on the ribosome. This Chlamydia muridarum (strain MoPn / Nigg) protein is Elongation factor Ts (tsf).